A 256-amino-acid chain; its full sequence is (R)-S-adenosyl-L-methionine hydrolase (256 aa).

Residues D7, H41, D68, and N183 each contribute to the adenosine site. (R)-S-adenosyl-L-methionine contacts are provided by N183, Y212, S226, E231, V234, and M236. Residue V234 coordinates adenosine.

Belongs to the SAM hydrolase / SAM-dependent halogenase family. Homotrimer.

It catalyses the reaction (R)-S-adenosyl-L-methionine + H2O = adenosine + L-methionine + H(+). Its function is as follows. Catalyzes the hydrolysis of S-adenosyl-L-methionine (SAM) into adenosine and L-methionine. Is likely stereoselective, specifically hydrolyzing (R)-S-adenosyl-L-methionine ((R)-SAM), the inactive form of the ubiquitous cofactor SAM, and not the active form of SAM, (S)-S-adenosyl-L-methionine. Probaly plays a role in preventing accumulation of (R)-S-adenosyl-L-methionine in cells; maintenance of (S)-S-denosyl-L-methionine homochirality is important for cellular health given that the (R)-form is largely inactive as a methyl donor and can function as an inhibitor of methyltransferases. Is unable to mediate a fluorination or chlorination reaction with SAM. This chain is (R)-S-adenosyl-L-methionine hydrolase, found in Pyrococcus horikoshii (strain ATCC 700860 / DSM 12428 / JCM 9974 / NBRC 100139 / OT-3).